Consider the following 347-residue polypeptide: NADH-ubiquinone oxidoreductase chain 2 (347 aa).

The next 10 membrane-spanning stretches (helical) occupy residues 1–21, 25–45, 59–79, 96–116, 122–142, 149–169, 200–220, 239–259, 274–294, and 325–345; these read MNPSIFIILLTTLILGTMMVI, HWLLAWIGFEMNMMAFIPIMM, YLLTQATASALLMMAVIINLM, TLMTVALAIKLGLAPFHFWVP, IPLTTGLILLTWQKLAPLSIL, INLYLMLTMSLLSILVGGWGG, LTLLNLLIYITMTFTMFMLFI, IITTLTMLTLLSMGGLPPLSG, DILIMPTFMAITALLNLYFYM, and LLPTAIVISTMLLPLTPMLSI.

Belongs to the complex I subunit 2 family. In terms of assembly, core subunit of respiratory chain NADH dehydrogenase (Complex I) which is composed of 45 different subunits. Interacts with TMEM242.

It is found in the mitochondrion inner membrane. The enzyme catalyses a ubiquinone + NADH + 5 H(+)(in) = a ubiquinol + NAD(+) + 4 H(+)(out). In terms of biological role, core subunit of the mitochondrial membrane respiratory chain NADH dehydrogenase (Complex I) which catalyzes electron transfer from NADH through the respiratory chain, using ubiquinone as an electron acceptor. Essential for the catalytic activity and assembly of complex I. The sequence is that of NADH-ubiquinone oxidoreductase chain 2 from Balaenoptera musculus (Blue whale).